A 299-amino-acid polypeptide reads, in one-letter code: Taste receptor type 2 member 1 (299 aa).

The Extracellular portion of the chain corresponds to 1-9; sequence MLESHLIIH. A helical membrane pass occupies residues 10–30; it reads FLLAVIQFLLGTFTNGIIVVV. The Cytoplasmic segment spans residues 31–55; sequence NGIDLIKHRKMAPLDLLLSCLAVSR. A helical transmembrane segment spans residues 56-76; the sequence is IFLQLFIFYVNVIVIFFIEFI. At 77–81 the chain is on the extracellular side; it reads MCSEN. Residues 82 to 102 form a helical membrane-spanning segment; sequence CAILLFINELELWLATWLGVF. Residues 103–124 lie on the Cytoplasmic side of the membrane; the sequence is YCAKVASVPHPLFIWLKMKISK. Residues 125 to 145 form a helical membrane-spanning segment; the sequence is LVPWMILGSLLYVSMTCVFHS. At 146 to 178 the chain is on the extracellular side; it reads KYAGFMVPYFLRNFFSQNATIQKEDTPAIQIFS. The N-linked (GlcNAc...) asparagine glycan is linked to Asn163. A helical membrane pass occupies residues 179–199; the sequence is FVAEFLVPLLIFLVAVLLLIF. Over 200–222 the chain is Cytoplasmic; it reads SLGRHTRQMRNTVAGSRVPGRGA. The chain crosses the membrane as a helical span at residues 223–243; the sequence is PISALLSILSFVILYFSHCMI. Topologically, residues 244-257 are extracellular; sequence KVFLSSLKFHVRSF. The helical transmembrane segment at 258–278 threads the bilayer; sequence ILPFFILVIGIYPSGHSLILI. Residues 279–299 lie on the Cytoplasmic side of the membrane; sequence LGNXKLKQNAKKFLLHSKCCQ.

This sequence belongs to the G-protein coupled receptor T2R family.

The protein resides in the membrane. In terms of biological role, receptor that may play a role in the perception of bitterness and is gustducin-linked. May play a role in sensing the chemical composition of the gastrointestinal content. The activity of this receptor may stimulate alpha gustducin, mediate PLC-beta-2 activation and lead to the gating of TRPM5. This chain is Taste receptor type 2 member 1 (TAS2R1), found in Pongo pygmaeus (Bornean orangutan).